Reading from the N-terminus, the 513-residue chain is Chromosomal replication initiator protein DnaA (513 aa).

The segment at 1–87 (MSVELWQQCV…IGSKRSSAPR (87 aa)) is domain I, interacts with DnaA modulators. A domain II region spans residues 87–176 (RAAPNAPLAA…QVEGALKHTS (90 aa)). The segment at 113–163 (AAPAPAPAPTSAPAKKAAAQKAAEVSEEPSRDSFDPMAGASSQQAPVRAEQ) is disordered. The segment covering 123–135 (SAPAKKAAAQKAA) has biased composition (low complexity). The segment at 177–393 (YLNRTFTFEN…GALKRVIAHS (217 aa)) is domain III, AAA+ region. ATP-binding residues include G221, G223, K224, and T225. A domain IV, binds dsDNA region spans residues 394–513 (HFMGRDITIE…YKNLLRTLTT (120 aa)).

The protein belongs to the DnaA family. In terms of assembly, oligomerizes as a right-handed, spiral filament on DNA at oriC.

The protein localises to the cytoplasm. Functionally, plays an essential role in the initiation and regulation of chromosomal replication. ATP-DnaA binds to the origin of replication (oriC) to initiate formation of the DNA replication initiation complex once per cell cycle. Binds the DnaA box (a 9 base pair repeat at the origin) and separates the double-stranded (ds)DNA. Forms a right-handed helical filament on oriC DNA; dsDNA binds to the exterior of the filament while single-stranded (ss)DNA is stabiized in the filament's interior. The ATP-DnaA-oriC complex binds and stabilizes one strand of the AT-rich DNA unwinding element (DUE), permitting loading of DNA polymerase. After initiation quickly degrades to an ADP-DnaA complex that is not apt for DNA replication. Binds acidic phospholipids. This Pseudomonas fluorescens (strain ATCC BAA-477 / NRRL B-23932 / Pf-5) protein is Chromosomal replication initiator protein DnaA.